Here is a 56-residue protein sequence, read N- to C-terminus: Large ribosomal subunit protein eL20 (56 aa).

The interval 1-24 (MSTYTVRGSFPARDGPQQFEKEVE) is disordered.

This sequence belongs to the eukaryotic ribosomal protein eL20 family. Part of the 50S ribosomal subunit. Binds 23S rRNA.

This Haloarcula marismortui (strain ATCC 43049 / DSM 3752 / JCM 8966 / VKM B-1809) (Halobacterium marismortui) protein is Large ribosomal subunit protein eL20.